Reading from the N-terminus, the 290-residue chain is Ribosomal RNA small subunit methyltransferase A (290 aa).

The S-adenosyl-L-methionine site is built by N27, L29, G54, E75, D100, and N125.

This sequence belongs to the class I-like SAM-binding methyltransferase superfamily. rRNA adenine N(6)-methyltransferase family. RsmA subfamily.

Its subcellular location is the cytoplasm. It catalyses the reaction adenosine(1518)/adenosine(1519) in 16S rRNA + 4 S-adenosyl-L-methionine = N(6)-dimethyladenosine(1518)/N(6)-dimethyladenosine(1519) in 16S rRNA + 4 S-adenosyl-L-homocysteine + 4 H(+). Its function is as follows. Specifically dimethylates two adjacent adenosines (A1518 and A1519) in the loop of a conserved hairpin near the 3'-end of 16S rRNA in the 30S particle. May play a critical role in biogenesis of 30S subunits. The sequence is that of Ribosomal RNA small subunit methyltransferase A from Streptococcus thermophilus (strain CNRZ 1066).